We begin with the raw amino-acid sequence, 25 residues long: Cytochrome c oxidase polypeptide VIIc (25 aa).

Residues 1–25 (SHYSEGPGQNLPFSVQNKXRLLGMM) form a disordered region.

Belongs to the cytochrome c oxidase VIIc family. As to quaternary structure, component of the cytochrome c oxidase (complex IV, CIV), a multisubunit enzyme composed of 14 subunits. The complex is composed of a catalytic core of 3 subunits MT-CO1, MT-CO2 and MT-CO3, encoded in the mitochondrial DNA, and 11 supernumerary subunits COX4I, COX5A, COX5B, COX6A, COX6B, COX6C, COX7A, COX7B, COX7C, COX8 and NDUFA4, which are encoded in the nuclear genome. The complex exists as a monomer or a dimer and forms supercomplexes (SCs) in the inner mitochondrial membrane with NADH-ubiquinone oxidoreductase (complex I, CI) and ubiquinol-cytochrome c oxidoreductase (cytochrome b-c1 complex, complex III, CIII), resulting in different assemblies (supercomplex SCI(1)III(2)IV(1) and megacomplex MCI(2)III(2)IV(2)). Interacts with RAB5IF.

Its subcellular location is the mitochondrion inner membrane. It functions in the pathway energy metabolism; oxidative phosphorylation. Component of the cytochrome c oxidase, the last enzyme in the mitochondrial electron transport chain which drives oxidative phosphorylation. The respiratory chain contains 3 multisubunit complexes succinate dehydrogenase (complex II, CII), ubiquinol-cytochrome c oxidoreductase (cytochrome b-c1 complex, complex III, CIII) and cytochrome c oxidase (complex IV, CIV), that cooperate to transfer electrons derived from NADH and succinate to molecular oxygen, creating an electrochemical gradient over the inner membrane that drives transmembrane transport and the ATP synthase. Cytochrome c oxidase is the component of the respiratory chain that catalyzes the reduction of oxygen to water. Electrons originating from reduced cytochrome c in the intermembrane space (IMS) are transferred via the dinuclear copper A center (CU(A)) of subunit 2 and heme A of subunit 1 to the active site in subunit 1, a binuclear center (BNC) formed by heme A3 and copper B (CU(B)). The BNC reduces molecular oxygen to 2 water molecules using 4 electrons from cytochrome c in the IMS and 4 protons from the mitochondrial matrix. The polypeptide is Cytochrome c oxidase polypeptide VIIc (Oncorhynchus mykiss (Rainbow trout)).